The primary structure comprises 336 residues: Biotin synthase (336 aa).

Positions 51–270 (NQVQCNQLLN…IALARIMMPK (220 aa)) constitute a Radical SAM core domain. The [4Fe-4S] cluster site is built by cysteine 66, cysteine 70, and cysteine 73. [2Fe-2S] cluster contacts are provided by cysteine 110, cysteine 141, cysteine 201, and arginine 274.

The protein belongs to the radical SAM superfamily. Biotin synthase family. In terms of assembly, homodimer. [4Fe-4S] cluster serves as cofactor. Requires [2Fe-2S] cluster as cofactor.

The catalysed reaction is (4R,5S)-dethiobiotin + (sulfur carrier)-SH + 2 reduced [2Fe-2S]-[ferredoxin] + 2 S-adenosyl-L-methionine = (sulfur carrier)-H + biotin + 2 5'-deoxyadenosine + 2 L-methionine + 2 oxidized [2Fe-2S]-[ferredoxin]. The protein operates within cofactor biosynthesis; biotin biosynthesis; biotin from 7,8-diaminononanoate: step 2/2. In terms of biological role, catalyzes the conversion of dethiobiotin (DTB) to biotin by the insertion of a sulfur atom into dethiobiotin via a radical-based mechanism. This Rhodopseudomonas palustris (strain ATCC BAA-98 / CGA009) protein is Biotin synthase.